The chain runs to 533 residues: Adenine deaminase (533 aa).

It belongs to the metallo-dependent hydrolases superfamily. Adenine deaminase family. The cofactor is Mn(2+).

It carries out the reaction adenine + H2O + H(+) = hypoxanthine + NH4(+). This is Adenine deaminase from Sulfurovum sp. (strain NBC37-1).